Reading from the N-terminus, the 152-residue chain is Transcriptional regulator MraZ (152 aa).

SpoVT-AbrB domains lie at 5–52 (ATLV…PLPE) and 81–124 (ASEC…DETT).

This sequence belongs to the MraZ family. Forms oligomers.

Its subcellular location is the cytoplasm. The protein resides in the nucleoid. Functionally, negatively regulates its own expression and that of the subsequent genes in the proximal part of the division and cell wall (dcw) gene cluster. Acts by binding directly to DNA. May also regulate the expression of genes outside the dcw cluster. The chain is Transcriptional regulator MraZ from Escherichia coli O45:K1 (strain S88 / ExPEC).